We begin with the raw amino-acid sequence, 230 residues long: Iron-dependent repressor IdeR (230 aa).

The HTH dtxR-type domain maps to 4 to 65 (LVDTTEMYLR…VAGNRHLELT (62 aa)).

The protein belongs to the DtxR/MntR family. As to quaternary structure, homodimer.

It localises to the cytoplasm. In terms of biological role, metal-dependent DNA-binding protein that controls transcription of many genes involved in iron metabolism. The polypeptide is Iron-dependent repressor IdeR (ideR) (Mycobacterium leprae (strain TN)).